We begin with the raw amino-acid sequence, 482 residues long: 7-deoxyloganetic acid glucosyltransferase (482 aa).

The active-site Proton acceptor is the His-22. Position 22 (His-22) interacts with an anthocyanidin. The active-site Charge relay is Asp-127. Residues Thr-149, Ala-362, Gln-364, His-379, Trp-382, Asn-383, Ser-384, and Glu-387 each coordinate UDP-alpha-D-glucose. Ala-402 lines the an anthocyanidin pocket. 2 residues coordinate UDP-alpha-D-glucose: Asp-403 and Gln-404.

The protein belongs to the UDP-glycosyltransferase family. Expressed in leaves, roots and stems. Lower levels of expression in flowers. Preferentially expressed in internal phloem parenchyma cells.

It carries out the reaction 7-deoxyloganetate + UDP-alpha-D-glucose = 7-deoxyloganate + UDP + H(+). In terms of biological role, iridoid glucosyltransferase acting exclusively on 7-deoxyloganetic acid. No activity with 7-deoxyloganetin. Catalyzes the fourth to last step in secologanin biosynthesis. This Catharanthus roseus (Madagascar periwinkle) protein is 7-deoxyloganetic acid glucosyltransferase (UGT709C2).